Here is a 341-residue protein sequence, read N- to C-terminus: tRNA N6-adenosine threonylcarbamoyltransferase (341 aa).

His-111 and His-115 together coordinate Fe cation. Substrate contacts are provided by residues 134 to 138, Asp-167, Gly-180, and Asn-276; that span reads LVSGG. Asp-304 lines the Fe cation pocket.

It belongs to the KAE1 / TsaD family. Requires Fe(2+) as cofactor.

Its subcellular location is the cytoplasm. It catalyses the reaction L-threonylcarbamoyladenylate + adenosine(37) in tRNA = N(6)-L-threonylcarbamoyladenosine(37) in tRNA + AMP + H(+). Its function is as follows. Required for the formation of a threonylcarbamoyl group on adenosine at position 37 (t(6)A37) in tRNAs that read codons beginning with adenine. Is involved in the transfer of the threonylcarbamoyl moiety of threonylcarbamoyl-AMP (TC-AMP) to the N6 group of A37, together with TsaE and TsaB. TsaD likely plays a direct catalytic role in this reaction. This Stutzerimonas stutzeri (strain A1501) (Pseudomonas stutzeri) protein is tRNA N6-adenosine threonylcarbamoyltransferase.